Here is a 148-residue protein sequence, read N- to C-terminus: Large ribosomal subunit protein bL9 (148 aa).

The protein belongs to the bacterial ribosomal protein bL9 family.

Functionally, binds to the 23S rRNA. The protein is Large ribosomal subunit protein bL9 of Caldicellulosiruptor bescii (strain ATCC BAA-1888 / DSM 6725 / KCTC 15123 / Z-1320) (Anaerocellum thermophilum).